The primary structure comprises 156 residues: ATP synthase subunit b (156 aa).

A helical membrane pass occupies residues valine 12–alanine 32.

It belongs to the ATPase B chain family. In terms of assembly, F-type ATPases have 2 components, F(1) - the catalytic core - and F(0) - the membrane proton channel. F(1) has five subunits: alpha(3), beta(3), gamma(1), delta(1), epsilon(1). F(0) has three main subunits: a(1), b(2) and c(10-14). The alpha and beta chains form an alternating ring which encloses part of the gamma chain. F(1) is attached to F(0) by a central stalk formed by the gamma and epsilon chains, while a peripheral stalk is formed by the delta and b chains.

Its subcellular location is the cell inner membrane. F(1)F(0) ATP synthase produces ATP from ADP in the presence of a proton or sodium gradient. F-type ATPases consist of two structural domains, F(1) containing the extramembraneous catalytic core and F(0) containing the membrane proton channel, linked together by a central stalk and a peripheral stalk. During catalysis, ATP synthesis in the catalytic domain of F(1) is coupled via a rotary mechanism of the central stalk subunits to proton translocation. In terms of biological role, component of the F(0) channel, it forms part of the peripheral stalk, linking F(1) to F(0). This chain is ATP synthase subunit b, found in Pseudomonas fluorescens (strain ATCC BAA-477 / NRRL B-23932 / Pf-5).